A 578-amino-acid polypeptide reads, in one-letter code: Maltogenic alpha-amylase (578 aa).

The protein belongs to the glycosyl hydrolase 13 family.

It carries out the reaction hydrolysis of (1-&gt;4)-alpha-D-glucosidic linkages in polysaccharides so as to remove successive alpha-maltose residues from the non-reducing ends of the chains.. Converts starch into maltose. In contrary to other maltogenic alpha-amylases BlmA cannot hydrolyze 1,4-alpha-glucosidic linkage next to 1,6-alpha-glucosidic linkages. This Bacillus licheniformis protein is Maltogenic alpha-amylase (blmA).